The sequence spans 420 residues: Cysteate-C-fatty acyltransferase (420 aa).

Residues 114-115 (GY), histidine 219, threonine 247, and alanine 249 each bind pyridoxal 5'-phosphate. N6-(pyridoxal phosphate)lysine is present on lysine 250.

It belongs to the class-II pyridoxal-phosphate-dependent aminotransferase family. The cofactor is pyridoxal 5'-phosphate.

The catalysed reaction is isopentadecanoyl-CoA + L-cysteate + H(+) = 3-oxocapnine + CO2 + CoA. It functions in the pathway lipid metabolism. Transferase involved in the biosynthesis of capnine, a sulfonolipid present in the outer membrane of gliding Bacteroidetes and essential for gliding motility. Catalyzes the formation of 3-dehydrocapnine from cysteate and isopentadecanoyl-CoA (13-methyl-myristoyl-CoA). In vitro, products are also detected when 13-methyl-myristic acid is substituted with tridecylic acid, myristic acid, pentadecanoic acid or palmitic acid. The chain is Cysteate-C-fatty acyltransferase from Capnocytophaga ochracea (strain ATCC 27872 / DSM 7271 / CCUG 9716 / JCM 12966 / NCTC 12371 / SS31 / VPI 2845) (Bacteroides ochraceus).